Consider the following 111-residue polypeptide: Large ribosomal subunit protein eL31 (111 aa).

The protein belongs to the eukaryotic ribosomal protein eL31 family.

This chain is Large ribosomal subunit protein eL31 (RPL31), found in Encephalitozoon cuniculi (strain GB-M1) (Microsporidian parasite).